The primary structure comprises 93 residues: Alpha-defensin 2 (93 aa).

An N-terminal signal peptide occupies residues M1–A19. Residues D20 to S58 constitute a propeptide that is removed on maturation. Positions Q23–R49 are disordered. 3 disulfide bridges follow: C64-C92, C66-C81, and C71-C91.

This sequence belongs to the alpha-defensin family. As to expression, paneth cells of the small bowel.

Its subcellular location is the secreted. Functionally, has broad-spectrum antimicrobial properties. Has antibacterial activity against the Gram-positive bacterium L.monocytogenes EGD and the Gram-negative bacteria E.coli ML-35p and avirulent S.typhimurium 7953, but not against the mouse-virulent S.typhimurium 14028S. Probably contributes to the antimicrobial barrier function of the small bowel mucosa. The chain is Alpha-defensin 2 (Defa2) from Mus musculus (Mouse).